The primary structure comprises 217 residues: Endo-1,4-beta-xylanase (217 aa).

Positions 1–17 (MQFLIPVVILCVSLVDS) are cleaved as a signal peptide. The GH11 domain maps to 20–217 (VLYNNEIGFN…SSGFADITVS (198 aa)). Asparagine 56 and asparagine 80 each carry an N-linked (GlcNAc...) asparagine glycan. Glutamate 107 functions as the Nucleophile in the catalytic mechanism. The active-site Proton donor is glutamate 204.

Belongs to the glycosyl hydrolase 11 (cellulase G) family. As to expression, expressed in larval carcasses and gut, and adult gut.

The protein resides in the secreted. The catalysed reaction is Endohydrolysis of (1-&gt;4)-beta-D-xylosidic linkages in xylans.. The protein operates within glycan degradation; xylan degradation. This Phaedon cochleariae (Mustard beetle) protein is Endo-1,4-beta-xylanase.